Consider the following 128-residue polypeptide: Large ribosomal subunit protein bL12 (128 aa).

This sequence belongs to the bacterial ribosomal protein bL12 family. Homodimer. Part of the ribosomal stalk of the 50S ribosomal subunit. Forms a multimeric L10(L12)X complex, where L10 forms an elongated spine to which 2 to 4 L12 dimers bind in a sequential fashion. Binds GTP-bound translation factors.

Forms part of the ribosomal stalk which helps the ribosome interact with GTP-bound translation factors. Is thus essential for accurate translation. This Desulfosudis oleivorans (strain DSM 6200 / JCM 39069 / Hxd3) (Desulfococcus oleovorans) protein is Large ribosomal subunit protein bL12.